Here is a 967-residue protein sequence, read N- to C-terminus: Leucine--tRNA ligase (967 aa).

Positions 43–53 (PYLSGHLHVGH) match the 'HIGH' region motif. A 'KMSKS' region motif is present at residues 650 to 654 (KMSKS). Residue Lys653 participates in ATP binding.

This sequence belongs to the class-I aminoacyl-tRNA synthetase family.

It localises to the cytoplasm. The catalysed reaction is tRNA(Leu) + L-leucine + ATP = L-leucyl-tRNA(Leu) + AMP + diphosphate. In Pyrococcus furiosus (strain ATCC 43587 / DSM 3638 / JCM 8422 / Vc1), this protein is Leucine--tRNA ligase.